Reading from the N-terminus, the 287-residue chain is Acetylglutamate kinase (287 aa).

Residues 70–71, R92, and N184 contribute to the substrate site; that span reads GG.

Belongs to the acetylglutamate kinase family. ArgB subfamily.

It is found in the cytoplasm. It carries out the reaction N-acetyl-L-glutamate + ATP = N-acetyl-L-glutamyl 5-phosphate + ADP. It functions in the pathway amino-acid biosynthesis; L-arginine biosynthesis; N(2)-acetyl-L-ornithine from L-glutamate: step 2/4. In terms of biological role, catalyzes the ATP-dependent phosphorylation of N-acetyl-L-glutamate. This is Acetylglutamate kinase from Roseobacter denitrificans (strain ATCC 33942 / OCh 114) (Erythrobacter sp. (strain OCh 114)).